The chain runs to 348 residues: Rhodopsin (348 aa).

M1 carries the post-translational modification N-acetylmethionine. Topologically, residues 1–36 (MNGTEGPNFYVPFSNATGVVRSPFEYPQYYLAEPWQ) are extracellular. N-linked (GlcNAc...) asparagine glycosylation is found at N2 and N15. A helical membrane pass occupies residues 37-61 (FSMLAAYMFLLIVLGFPINFLTLYV). The Cytoplasmic segment spans residues 62–73 (TVQHKKLRTPLN). The chain crosses the membrane as a helical span at residues 74 to 96 (YILLNLAVADLFMVFGGFTTTLY). The Extracellular portion of the chain corresponds to 97–110 (TSLHGYFVFGPTGC). C110 and C187 are oxidised to a cystine. The helical transmembrane segment at 111–133 (NLEGFFATLGGEIALWSLVVLAI) threads the bilayer. The 'Ionic lock' involved in activated form stabilization signature appears at 134-136 (ERY). Residues 134–152 (ERYVVICKPMSNFRFGENH) are Cytoplasmic-facing. The chain crosses the membrane as a helical span at residues 153-173 (AIMGVVFTWIMALACAAPPLV). Residues 174–202 (GWSRYIPEGMQCSCGVDYYTLKPEVNNES) lie on the Extracellular side of the membrane. A Zn(2+)-binding site is contributed by E201. Residues 203 to 224 (FVIYMFVVHFTIPLIVIFFCYG) form a helical membrane-spanning segment. Residues 225–252 (QLVFTVKEAAAQQQESATTQKAEKEVTR) lie on the Cytoplasmic side of the membrane. Residues 253–274 (MVILMVVFFLICWFPYAGVAFY) traverse the membrane as a helical segment. Residues 275 to 286 (IFTHQGSNFGPI) lie on the Extracellular side of the membrane. Position 279 (Q279) interacts with Zn(2+). Residues 287 to 308 (FMTLPAFFAKSSSIYNPVIYIM) form a helical membrane-spanning segment. K296 carries the N6-(retinylidene)lysine modification. Over 309–348 (MNKQFRNCMLTTLCCGKNILGDDEASATASKTETSQVAPA) the chain is Cytoplasmic. Residues C322 and C323 are each lipidated (S-palmitoyl cysteine). Positions 330–348 (DDEASATASKTETSQVAPA) are interaction with SAG. Position 334 is a phosphoserine (S334). Residue T336 is modified to Phosphothreonine. Residue S338 is modified to Phosphoserine. Phosphothreonine occurs at positions 340 and 342. S343 is subject to Phosphoserine.

Belongs to the G-protein coupled receptor 1 family. Opsin subfamily. In terms of assembly, homodimer. May form a complex composed of RHO, GRK1 and RCVRN in a Ca(2+)-dependent manner; RCVRN prevents the interaction between GRK1 and RHO. Interacts with GRK1. Interacts (phosphorylated form) with SAG. Interacts with GNAT1. Interacts with GNAT3. SAG and G-proteins compete for a common binding site. Interacts with PRCD; the interaction promotes PRCD stability. Forms a complex with ASAP1 and ARF4. Forms a complex with ASAP1, RAB11A, Rabin8/RAB3IP, ARF4 and RAB11FIP3; the complex regulates Golgi-to-cilia rhodopsin/RHO transport in photoreceptors. Post-translationally, phosphorylated on some or all of the serine and threonine residues present in the C-terminal region. In terms of processing, contains one covalently linked retinal chromophore. Upon light absorption, the covalently bound 11-cis-retinal is converted to all-trans-retinal. After hydrolysis of the Schiff base and release of the covalently bound all-trans-retinal, active rhodopsin is regenerated by binding of a fresh molecule of 11-cis-retinal.

It localises to the membrane. The protein resides in the cell projection. The protein localises to the cilium. It is found in the photoreceptor outer segment. Photoreceptor required for image-forming vision at low light intensity. Required for photoreceptor cell viability after birth. Light-induced isomerization of 11-cis to all-trans retinal triggers a conformational change that activates signaling via G-proteins. Subsequent receptor phosphorylation mediates displacement of the bound G-protein alpha subunit by the arrestin SAG and terminates signaling. The sequence is that of Rhodopsin (RHO) from Cricetulus griseus (Chinese hamster).